We begin with the raw amino-acid sequence, 614 residues long: Threonine--tRNA ligase (614 aa).

The editing domain stretch occupies residues 1-138; sequence MRILTIHARK…PLSELSKTIR (138 aa). Catalytic regions lie at residues 195-492 and 196-492; these read NRVN…PYIP and RVND…PYIP. Positions 289, 340, and 461 each coordinate Zn(2+).

It belongs to the class-II aminoacyl-tRNA synthetase family. Homodimer. The cofactor is Zn(2+).

It is found in the cytoplasm. It carries out the reaction tRNA(Thr) + L-threonine + ATP = L-threonyl-tRNA(Thr) + AMP + diphosphate + H(+). In terms of biological role, catalyzes the attachment of threonine to tRNA(Thr) in a two-step reaction: L-threonine is first activated by ATP to form Thr-AMP and then transferred to the acceptor end of tRNA(Thr). Also edits incorrectly charged L-seryl-tRNA(Thr). The polypeptide is Threonine--tRNA ligase (Staphylothermus marinus (strain ATCC 43588 / DSM 3639 / JCM 9404 / F1)).